Here is a 177-residue protein sequence, read N- to C-terminus: Large ribosomal subunit protein uL6 (177 aa).

It belongs to the universal ribosomal protein uL6 family. As to quaternary structure, part of the 50S ribosomal subunit.

In terms of biological role, this protein binds to the 23S rRNA, and is important in its secondary structure. It is located near the subunit interface in the base of the L7/L12 stalk, and near the tRNA binding site of the peptidyltransferase center. The polypeptide is Large ribosomal subunit protein uL6 (Albidiferax ferrireducens (strain ATCC BAA-621 / DSM 15236 / T118) (Rhodoferax ferrireducens)).